The following is a 313-amino-acid chain: Ribosomal RNA small subunit methyltransferase H (313 aa).

S-adenosyl-L-methionine contacts are provided by residues 35–37, D55, F79, D100, and Q107; that span reads GGH.

This sequence belongs to the methyltransferase superfamily. RsmH family.

The protein localises to the cytoplasm. It catalyses the reaction cytidine(1402) in 16S rRNA + S-adenosyl-L-methionine = N(4)-methylcytidine(1402) in 16S rRNA + S-adenosyl-L-homocysteine + H(+). In terms of biological role, specifically methylates the N4 position of cytidine in position 1402 (C1402) of 16S rRNA. The sequence is that of Ribosomal RNA small subunit methyltransferase H from Burkholderia mallei (strain NCTC 10247).